Reading from the N-terminus, the 477-residue chain is PTS system MurNAc-GlcNAc-specific EIIBC component (477 aa).

The region spanning 5-87 is the PTS EIIB type-1 domain; sequence QQLAHHILDA…VKLSGVQLGE (83 aa). Cys-27 (phosphocysteine intermediate; for EIIB activity) is an active-site residue. The disordered stretch occupies residues 91-113; sequence HRSNTSNIKNQAQQNKREFQQKR. Polar residues predominate over residues 92–104; it reads RSNTSNIKNQAQQ. The region spanning 123 to 477 is the PTS EIIC type-1 domain; it reads KSIANIFIPL…EMRNLNKLGD (355 aa). The next 10 membrane-spanning stretches (helical) occupy residues 128–148, 167–187, 192–212, 227–247, 267–287, 298–318, 342–362, 377–397, 401–421, and 443–463; these read IFIP…IAAV, VAVL…FTGF, VFGA…LTGI, LIAG…LSII, ISLL…AGFI, VIGV…LPLV, LLPI…ALWV, ALPV…TLPL, FITA…IGHI, and LGYI…TYFF.

It localises to the cell membrane. It carries out the reaction N-acetyl-beta-D-muramate-(1-&gt;4)-N-acetyl-D-glucosamine(out) + N(pros)-phospho-L-histidyl-[protein] = 6-phospho-N-acetyl-beta-D-muramate-(1-&gt;4)-N-acetyl-D-glucosamine(in) + L-histidyl-[protein]. The protein operates within cell wall biogenesis; peptidoglycan recycling. Its function is as follows. The phosphoenolpyruvate-dependent sugar phosphotransferase system (sugar PTS), a major carbohydrate active transport system, catalyzes the phosphorylation of incoming sugar substrates concomitantly with their translocation across the cell membrane. This system is involved in the uptake and phosphorylation of MurNAc-GlcNAc, the principle peptidoglycan turnover product of S.aureus, yielding cytoplasmic MurNAc 6P-GlcNAc. The protein is PTS system MurNAc-GlcNAc-specific EIIBC component of Staphylococcus haemolyticus (strain JCSC1435).